Reading from the N-terminus, the 462-residue chain is L-seryl-tRNA(Sec) selenium transferase (462 aa).

Lys293 carries the post-translational modification N6-(pyridoxal phosphate)lysine.

This sequence belongs to the SelA family. Pyridoxal 5'-phosphate serves as cofactor.

It is found in the cytoplasm. It catalyses the reaction L-seryl-tRNA(Sec) + selenophosphate + H(+) = L-selenocysteinyl-tRNA(Sec) + phosphate. It participates in aminoacyl-tRNA biosynthesis; selenocysteinyl-tRNA(Sec) biosynthesis; selenocysteinyl-tRNA(Sec) from L-seryl-tRNA(Sec) (bacterial route): step 1/1. Its function is as follows. Converts seryl-tRNA(Sec) to selenocysteinyl-tRNA(Sec) required for selenoprotein biosynthesis. The protein is L-seryl-tRNA(Sec) selenium transferase of Clostridium botulinum (strain 657 / Type Ba4).